A 945-amino-acid polypeptide reads, in one-letter code: Isoleucine--tRNA ligase (945 aa).

Residues 66–76 (PYANGDIHLGH) carry the 'HIGH' region motif. Glu581 provides a ligand contact to L-isoleucyl-5'-AMP. A 'KMSKS' region motif is present at residues 622 to 626 (KMSKS). Lys625 serves as a coordination point for ATP. Cys908, Cys911, Cys928, and Cys931 together coordinate Zn(2+).

It belongs to the class-I aminoacyl-tRNA synthetase family. IleS type 1 subfamily. In terms of assembly, monomer. Zn(2+) is required as a cofactor.

It localises to the cytoplasm. The catalysed reaction is tRNA(Ile) + L-isoleucine + ATP = L-isoleucyl-tRNA(Ile) + AMP + diphosphate. Functionally, catalyzes the attachment of isoleucine to tRNA(Ile). As IleRS can inadvertently accommodate and process structurally similar amino acids such as valine, to avoid such errors it has two additional distinct tRNA(Ile)-dependent editing activities. One activity is designated as 'pretransfer' editing and involves the hydrolysis of activated Val-AMP. The other activity is designated 'posttransfer' editing and involves deacylation of mischarged Val-tRNA(Ile). The sequence is that of Isoleucine--tRNA ligase from Burkholderia orbicola (strain MC0-3).